We begin with the raw amino-acid sequence, 217 residues long: uncharacterized protein (217 aa).

Transmembrane regions (helical) follow at residues 13-35 (IWLT…IALL), 50-68 (FSLV…ILYL), 75-94 (FLLA…EWRI), 109-131 (MMAL…LFSL), 152-174 (YLAI…AAAV), and 194-216 (GFSL…FAGL).

The protein localises to the cell membrane. This is an uncharacterized protein from Archaeoglobus fulgidus (strain ATCC 49558 / DSM 4304 / JCM 9628 / NBRC 100126 / VC-16).